Here is a 60-residue protein sequence, read N- to C-terminus: Large ribosomal subunit protein uL30 (60 aa).

This sequence belongs to the universal ribosomal protein uL30 family. Part of the 50S ribosomal subunit.

The polypeptide is Large ribosomal subunit protein uL30 (Cupriavidus metallidurans (strain ATCC 43123 / DSM 2839 / NBRC 102507 / CH34) (Ralstonia metallidurans)).